The following is a 144-amino-acid chain: Large ribosomal subunit protein uL13 (144 aa).

The protein belongs to the universal ribosomal protein uL13 family. Part of the 50S ribosomal subunit.

Functionally, this protein is one of the early assembly proteins of the 50S ribosomal subunit, although it is not seen to bind rRNA by itself. It is important during the early stages of 50S assembly. This is Large ribosomal subunit protein uL13 from Pelotomaculum thermopropionicum (strain DSM 13744 / JCM 10971 / SI).